Here is a 172-residue protein sequence, read N- to C-terminus: Outer-membrane lipoprotein carrier protein (172 aa).

The N-terminal stretch at Met-1 to Ala-16 is a signal peptide.

Belongs to the LolA family. Monomer.

Its subcellular location is the periplasm. Participates in the translocation of lipoproteins from the inner membrane to the outer membrane. Only forms a complex with a lipoprotein if the residue after the N-terminal Cys is not an aspartate (The Asp acts as a targeting signal to indicate that the lipoprotein should stay in the inner membrane). The polypeptide is Outer-membrane lipoprotein carrier protein (Wolinella succinogenes (strain ATCC 29543 / DSM 1740 / CCUG 13145 / JCM 31913 / LMG 7466 / NCTC 11488 / FDC 602W) (Vibrio succinogenes)).